Consider the following 167-residue polypeptide: Ribosome maturation factor RimM (167 aa).

The 75-residue stretch at 92 to 166 (DDEFYHTDLI…RIVADPPEGL (75 aa)) folds into the PRC barrel domain.

Belongs to the RimM family. Binds ribosomal protein uS19.

The protein resides in the cytoplasm. Functionally, an accessory protein needed during the final step in the assembly of 30S ribosomal subunit, possibly for assembly of the head region. Essential for efficient processing of 16S rRNA. May be needed both before and after RbfA during the maturation of 16S rRNA. It has affinity for free ribosomal 30S subunits but not for 70S ribosomes. The protein is Ribosome maturation factor RimM of Ruegeria pomeroyi (strain ATCC 700808 / DSM 15171 / DSS-3) (Silicibacter pomeroyi).